The following is a 185-amino-acid chain: Ribosome-recycling factor (185 aa).

It belongs to the RRF family.

Its subcellular location is the cytoplasm. In terms of biological role, responsible for the release of ribosomes from messenger RNA at the termination of protein biosynthesis. May increase the efficiency of translation by recycling ribosomes from one round of translation to another. This Corynebacterium kroppenstedtii (strain DSM 44385 / JCM 11950 / CIP 105744 / CCUG 35717) protein is Ribosome-recycling factor.